We begin with the raw amino-acid sequence, 295 residues long: uncharacterized protein (295 aa).

Disordered regions lie at residues 33-52 and 180-295; these read VDAPPASQIPGLSNLGDSHS and LSKA…AELK. S50 bears the Phosphoserine mark. Composition is skewed to polar residues over residues 205 to 217 and 241 to 251; these read QKNSSPTNFSKLI and TSRASVLSQSP. Residues 267 to 276 are compositionally biased toward acidic residues; it reads EASEGPEDTP. Over residues 277–289 the composition is skewed to low complexity; it reads ESSQSPEESVSAS.

This is an uncharacterized protein from Homo sapiens (Human).